Reading from the N-terminus, the 308-residue chain is uncharacterized protein (308 aa).

Positions 1–17 (MKSLALLLSLLINFSIG) are cleaved as a signal peptide. Asn13, Asn91, Asn159, and Asn210 each carry an N-linked (GlcNAc...) asparagine glycan. The disordered stretch occupies residues 213-308 (DEISGGTGAG…HDNYISSFCT (96 aa)). Gly residues-rich tracts occupy residues 217–231 (GGTG…GSGS) and 239–252 (SDGG…GSGS). Over residues 267–284 (NKNNNKNKNNNNNNNNYN) the composition is skewed to low complexity.

It localises to the secreted. This is an uncharacterized protein from Dictyostelium discoideum (Social amoeba).